A 916-amino-acid polypeptide reads, in one-letter code: Alanine--tRNA ligase (916 aa).

His-611, His-615, Cys-714, and His-718 together coordinate Zn(2+).

It belongs to the class-II aminoacyl-tRNA synthetase family. Zn(2+) serves as cofactor.

It is found in the cytoplasm. It catalyses the reaction tRNA(Ala) + L-alanine + ATP = L-alanyl-tRNA(Ala) + AMP + diphosphate. Functionally, catalyzes the attachment of alanine to tRNA(Ala) in a two-step reaction: alanine is first activated by ATP to form Ala-AMP and then transferred to the acceptor end of tRNA(Ala). Also edits incorrectly charged Ser-tRNA(Ala) and Gly-tRNA(Ala) via its editing domain. In Methanospirillum hungatei JF-1 (strain ATCC 27890 / DSM 864 / NBRC 100397 / JF-1), this protein is Alanine--tRNA ligase.